A 142-amino-acid polypeptide reads, in one-letter code: Large ribosomal subunit protein uL16 (142 aa).

The protein belongs to the universal ribosomal protein uL16 family. As to quaternary structure, part of the 50S ribosomal subunit.

In terms of biological role, binds 23S rRNA and is also seen to make contacts with the A and possibly P site tRNAs. The protein is Large ribosomal subunit protein uL16 of Thermosipho africanus (strain TCF52B).